The primary structure comprises 286 residues: MRYIRLCIISLLATLPLAVHASPQPLEQIKLSESQLSGRVGMIEMDLASGRTLTAWRADERFPMMSTFKVVLCGAVLARVDAGDEQLERKIHYRQQDLVDYSPVSEKHLADGMTVGELCAAAITMSDNSAANLLLATVGGPAGLTAFLRQIGDNVTRLDRWETELNEALPGDARDTTTPASMAATLRKLLTSQRLSARSQRQLLQWMVDDRVAGPLIRSVLPAGWFIADKTGASKRGARGIVALLGPNNKAERIVVIYLRDTPASMAERNQQIAGIGAALIEHWQR.

A signal peptide spans 1-21 (MRYIRLCIISLLATLPLAVHA). The active-site Acyl-ester intermediate is the serine 66. A disulfide bridge links cysteine 73 with cysteine 119. Residue glutamate 164 is the Proton acceptor of the active site. Position 230–232 (230–232 (KTG)) interacts with substrate.

This sequence belongs to the class-A beta-lactamase family.

The enzyme catalyses a beta-lactam + H2O = a substituted beta-amino acid. In terms of biological role, SHV enzymes hydrolyze broad spectrum cephalosporins notably cefotaxime and ceftazidime. SHV-5 causes particularly high levels of resistance to aztreonam and ceftazidime. The polypeptide is Beta-lactamase SHV-5 (bla) (Klebsiella pneumoniae).